The chain runs to 2289 residues: Protein Ycf2 (2289 aa).

1643-1650 (GSIGTGRS) is a binding site for ATP.

The protein belongs to the Ycf2 family.

Its subcellular location is the plastid. The protein localises to the chloroplast stroma. Its function is as follows. Probable ATPase of unknown function. Its presence in a non-photosynthetic plant (Epifagus virginiana) and experiments in tobacco indicate that it has an essential function which is probably not related to photosynthesis. In Capsella bursa-pastoris (Shepherd's purse), this protein is Protein Ycf2.